Reading from the N-terminus, the 463-residue chain is L-seryl-tRNA(Sec) selenium transferase (463 aa).

Lys-295 bears the N6-(pyridoxal phosphate)lysine mark.

It belongs to the SelA family. As to quaternary structure, homodecamer; pentamer of dimers. Binds only one seryl-tRNA(Sec) per dimer. It depends on pyridoxal 5'-phosphate as a cofactor.

The protein resides in the cytoplasm. The catalysed reaction is L-seryl-tRNA(Sec) + selenophosphate + H(+) = L-selenocysteinyl-tRNA(Sec) + phosphate. Its pathway is aminoacyl-tRNA biosynthesis; selenocysteinyl-tRNA(Sec) biosynthesis; selenocysteinyl-tRNA(Sec) from L-seryl-tRNA(Sec) (bacterial route): step 1/1. In terms of biological role, converts seryl-tRNA(Sec) to selenocysteinyl-tRNA(Sec) required for selenoprotein biosynthesis. This is L-seryl-tRNA(Sec) selenium transferase from Escherichia coli (strain SMS-3-5 / SECEC).